We begin with the raw amino-acid sequence, 210 residues long: Large ribosomal subunit protein uL3 (210 aa).

The protein belongs to the universal ribosomal protein uL3 family. As to quaternary structure, part of the 50S ribosomal subunit. Forms a cluster with proteins L14 and L19.

In terms of biological role, one of the primary rRNA binding proteins, it binds directly near the 3'-end of the 23S rRNA, where it nucleates assembly of the 50S subunit. The protein is Large ribosomal subunit protein uL3 of Pediococcus pentosaceus (strain ATCC 25745 / CCUG 21536 / LMG 10740 / 183-1w).